We begin with the raw amino-acid sequence, 287 residues long: tRNA N(3)-cytidine methyltransferase METTL6 (287 aa).

S-adenosyl-L-methionine contacts are provided by Trp45, Tyr49, Gly87, Asp110, Asp136, Leu137, and Ile157. A disordered region spans residues Arg267 to Phe287.

This sequence belongs to the methyltransferase superfamily. METL family. In terms of assembly, monomer. Interacts with SARS1/SerRS; interaction is mediated via tRNA(Ser) and is required for N(3)-methylcytidine methylation.

It is found in the cytoplasm. The protein localises to the nucleus. The catalysed reaction is cytidine(32) in tRNA(Ser) + S-adenosyl-L-methionine = N(3)-methylcytidine(32) in tRNA(Ser) + S-adenosyl-L-homocysteine + H(+). S-adenosyl-L-methionine-dependent methyltransferase that mediates N(3)-methylcytidine modification of residue 32 of the tRNA anticodon loop of tRNA(Ser), including tRNA(Ser)(UGA) and tRNA(Ser)(GCU). Interaction with SARS1/SerRS is required for N(3)-methylcytidine methylation. The protein is tRNA N(3)-cytidine methyltransferase METTL6 (Mettl6) of Rattus norvegicus (Rat).